The sequence spans 354 residues: Stearoyl-CoA desaturase (354 aa).

Positions 1-28 are disordered; it reads MPGHLLQEEMTSSYTTTTTTITEPPSES. The Cytoplasmic portion of the chain corresponds to 1-67; it reads MPGHLLQEEM…EGPPPKLEYV (67 aa). A compositionally biased stretch (low complexity) spans 8 to 28; it reads EEMTSSYTTTTTTITEPPSES. A helical membrane pass occupies residues 68–88; that stretch reads WRNIILMALLHLGALYGLVLV. Asn-70 serves as a coordination point for substrate. At 89 to 92 the chain is on the lumenal side; that stretch reads PSSK. A helical membrane pass occupies residues 93–113; the sequence is VYTLLWAFVYYVISIEGIGAG. Topologically, residues 114 to 212 are cytoplasmic; sequence VHRLWSHRTY…EKLVMFQRRY (99 aa). Fe cation is bound by residues His-115 and His-120. A Histidine box-1 motif is present at residues 115-120; it reads HRLWSH. The substrate site is built by Asn-143, Arg-150, and Asp-151. Positions 152, 155, and 156 each coordinate Fe cation. The short motif at 152–156 is the Histidine box-2 element; that stretch reads HRAHH. Residues Arg-183 and Lys-184 each contribute to the substrate site. Position 198 is a phosphoserine (Ser-198). Residues 213 to 232 form a helical membrane-spanning segment; sequence YKPAILLMCFILPTFVPWYF. At 233–236 the chain is on the lumenal side; that stretch reads WGEA. A helical membrane pass occupies residues 237–258; the sequence is FVNSLCVSTFLRYTLVLNATWL. Residue Trp-257 coordinates substrate. Over 259–354 the chain is Cytoplasmic; the sequence is VNSAAHLYGY…RTGDGSCKSG (96 aa). Fe cation-binding residues include His-264, His-293, His-296, and His-297. The Histidine box-3 signature appears at 293-297; it reads HNYHH.

The protein belongs to the fatty acid desaturase type 1 family. The cofactor is Fe(2+).

Its subcellular location is the endoplasmic reticulum membrane. It carries out the reaction octadecanoyl-CoA + 2 Fe(II)-[cytochrome b5] + O2 + 2 H(+) = (9Z)-octadecenoyl-CoA + 2 Fe(III)-[cytochrome b5] + 2 H2O. The catalysed reaction is hexadecanoyl-CoA + 2 Fe(II)-[cytochrome b5] + O2 + 2 H(+) = (9Z)-hexadecenoyl-CoA + 2 Fe(III)-[cytochrome b5] + 2 H2O. Functionally, stearoyl-CoA desaturase that utilizes O(2) and electrons from reduced cytochrome b5 to introduce the first double bond into saturated fatty acyl-CoA substrates. Catalyzes the insertion of a cis double bond at the delta-9 position into fatty acyl-CoA substrates including palmitoyl-CoA and stearoyl-CoA. Gives rise to a mixture of 16:1 and 18:1 unsaturated fatty acids. Plays an important role in lipid biosynthesis. Plays an important role in regulating the expression of genes that are involved in lipogenesis and in regulating mitochondrial fatty acid oxidation. Plays an important role in body energy homeostasis. Contributes to the biosynthesis of membrane phospholipids, cholesterol esters and triglycerides. This chain is Stearoyl-CoA desaturase (SCD), found in Mesocricetus auratus (Golden hamster).